A 174-amino-acid chain; its full sequence is CDP-archaeol synthase (174 aa).

4 consecutive transmembrane segments (helical) span residues 51–71 (LIGLLQILLAPHIAPYLAGFI), 74–94 (SLLVGYSYIALITMPFGALLG), 112–132 (MLPIADQLDFVAGAWVLTFLL), and 136–156 (WLLANFTIWVAIAVILIIPVF).

It belongs to the CDP-archaeol synthase family. It depends on Mg(2+) as a cofactor.

Its subcellular location is the cell membrane. The catalysed reaction is 2,3-bis-O-(geranylgeranyl)-sn-glycerol 1-phosphate + CTP + H(+) = CDP-2,3-bis-O-(geranylgeranyl)-sn-glycerol + diphosphate. It functions in the pathway membrane lipid metabolism; glycerophospholipid metabolism. Catalyzes the formation of CDP-2,3-bis-(O-geranylgeranyl)-sn-glycerol (CDP-archaeol) from 2,3-bis-(O-geranylgeranyl)-sn-glycerol 1-phosphate (DGGGP) and CTP. This reaction is the third ether-bond-formation step in the biosynthesis of archaeal membrane lipids. The protein is CDP-archaeol synthase of Methanocella arvoryzae (strain DSM 22066 / NBRC 105507 / MRE50).